The following is a 519-amino-acid chain: Ubiquitin carboxyl-terminal hydrolase 30 (519 aa).

The Mitochondrial intermembrane portion of the chain corresponds to 1–52; that stretch reads MSWAPVSTWSRRTPLAACCSAPELPPAGAWKACAAGSLRIGPQGRCKMMKNW. The helical transmembrane segment at 53–73 threads the bilayer; that stretch reads GMIGGIAAALAAGIYVLWGPI. Topologically, residues 74–519 are cytoplasmic; sequence SDRKKYRKGL…HPEDQRAAEK (446 aa). The 420-residue stretch at 85 to 504 folds into the USP domain; sequence PGLLNLGNTC…SAYLLFYERI (420 aa). Cys-94 acts as the Nucleophile in catalysis. The tract at residues 379-405 is disordered; sequence SKQPANHLSAAEQETTDGKEGGAQNPT. The active-site Proton acceptor is His-455.

It belongs to the peptidase C19 family.

The protein resides in the mitochondrion outer membrane. It carries out the reaction Thiol-dependent hydrolysis of ester, thioester, amide, peptide and isopeptide bonds formed by the C-terminal Gly of ubiquitin (a 76-residue protein attached to proteins as an intracellular targeting signal).. Deubiquitinating enzyme that acts as a key inhibitor of mitophagy by counteracting the action of parkin (PRKN). The sequence is that of Ubiquitin carboxyl-terminal hydrolase 30 (usp30) from Xenopus tropicalis (Western clawed frog).